The following is a 286-amino-acid chain: uncharacterized protein (286 aa).

NAD(+) contacts are provided by residues 4–18 (AVIG…IARN) and threonine 95. Residue lysine 171 is part of the active site. Lysine 239 serves as a coordination point for NAD(+).

The protein belongs to the HIBADH-related family.

This is an uncharacterized protein from Bacillus subtilis (strain 168).